Consider the following 4367-residue polypeptide: Guanylate cyclase (4367 aa).

A compositionally biased stretch (polar residues) spans 1–10; the sequence is MKKTRTTAAE. Residues 1 to 70 are disordered; sequence MKKTRTTAAE…MSFLQGKHQQ (70 aa). Over 1-150 the chain is Cytoplasmic; sequence MKKTRTTAAE…FKNLWEQFHR (150 aa). Residues 19–33 are compositionally biased toward basic and acidic residues; it reads PHDEHRGRGREHGGA. The segment covering 54–63 has biased composition (polar residues); it reads HQATQKQMSF. A helical membrane pass occupies residues 151–171; it reads VINWWFLVMAIIQAIPQLHYN. Over 172–174 the chain is Extracellular; sequence PNH. A helical membrane pass occupies residues 175–195; it reads AWSTALPFAIVLVFGMLKDAF. Residues 196–373 are Cytoplasmic-facing; the sequence is TDLGRRERDR…GFKRPHIEKD (178 aa). Residues 374-394 form a helical membrane-spanning segment; the sequence is INTYLFISFFIVFLTILISVM. Topologically, residues 395–452 are extracellular; that stretch reads SKWSVQERDSGDTGVTDAGASSGSGSSSGETSQTYGSSVEFMLGSRDLLQNPWMSILR. The segment at 402–426 is disordered; that stretch reads RDSGDTGVTDAGASSGSGSSSGETS. A compositionally biased stretch (low complexity) spans 407–426; that stretch reads TGVTDAGASSGSGSSSGETS. A helical transmembrane segment spans residues 453–473; the sequence is FLAVYAPVLPLSLPLILDVVY. Residues 474–2258 are Cytoplasmic-facing; it reads LLQSVLIEGD…VHGRLSLMRV (1785 aa). Disordered stretches follow at residues 486–535, 550–699, 831–918, 932–966, 980–1047, 1079–1164, 1344–1593, 1607–1652, 1773–1861, and 1881–1946; these read IRGG…QQPL, SEKF…ISGR, ETSA…ASSL, RLEE…PQLA, VGIQ…GELS, GMSF…MPAV, PSGT…SLKS, FRRG…TGTG, GGRG…GLRS, and DKQH…PQHL. Residues 523–535 show a composition bias toward polar residues; that stretch reads AHSSQNASLQQPL. Composition is skewed to basic and acidic residues over residues 605–628 and 670–679; these read ETLR…REQL and RRSDDRDRKS. The span at 850-863 shows a compositional bias: low complexity; that stretch reads SAASSRSQSAPASA. A compositionally biased stretch (polar residues) spans 880–892; sequence QTLTNQQTGQQSP. The segment covering 906–917 has biased composition (low complexity); sequence ASPGAADSPASS. Basic and acidic residues predominate over residues 932–948; sequence RLEETGSQKEEDSRSDR. Residues 983 to 996 show a composition bias toward low complexity; it reads QSQHSSQSLLSSRQ. Residues 1025 to 1047 show a composition bias toward basic and acidic residues; sequence DRMYSRDYHRESRSSSPRDGELS. Composition is skewed to polar residues over residues 1084 to 1094 and 1117 to 1130; these read SRPSSQFTFSS and RSLT…TASP. Residues 1344–1357 show a composition bias toward low complexity; it reads PSGTSASSGAPSGP. Composition is skewed to gly residues over residues 1370–1381 and 1389–1400; these read QGQGHGSLGAPG and CLGGAGGSGARG. Residues 1443–1454 show a composition bias toward pro residues; sequence VPSPRPLSPAGP. Residues 1527–1542 show a composition bias toward basic and acidic residues; sequence SFKEKHEEFAFSKDED. Residues 1543–1567 show a composition bias toward acidic residues; that stretch reads TATVDQDDTQSATDEEHDVEGEEEE. Residues 1583-1593 show a composition bias toward low complexity; sequence SASASLMSLKS. Composition is skewed to polar residues over residues 1628-1652, 1779-1791, and 1843-1852; these read GRSS…TGTG, VSLS…SSAK, and VNPSGQTYSQ. Residues 1881-1922 are compositionally biased toward basic and acidic residues; that stretch reads DKQHQRGHGPEGDEGSHELEGHDAHTGDSHGGHHRDQAEPRA. The segment covering 1933 to 1942 has biased composition (polar residues); that stretch reads RLPQKTQNRL. A helical transmembrane segment spans residues 2259-2279; it reads STVILWSFFKSLCIGLPTFLF. The Extracellular portion of the chain corresponds to 2280-2289; sequence QPQAFWSAVE. Residues 2290 to 2310 traverse the membrane as a helical segment; sequence VYDPLLLMIVDFFWTTLPGII. Residues 2311-2343 are Cytoplasmic-facing; it reads HGYSDQDLPTHLLPSVPVLYTPGRRRLYFNGFR. The helical transmembrane segment at 2344 to 2364 threads the bilayer; it reads FILWTVEGIIYSFLIFYLLQA. Over 2365 to 2376 the chain is Extracellular; it reads TWMDGNTFHDGQ. Residues 2377-2397 form a helical membrane-spanning segment; that stretch reads VLGFHSYGILLLFGSLLQSNV. Topologically, residues 2398-2408 are cytoplasmic; it reads RIILETSLWTP. The chain crosses the membrane as a helical span at residues 2409–2429; sequence TFLFTTIVLCTIMFFPTVLLY. Residues 2430-2444 are Extracellular-facing; it reads SVTGWPRRYMELAGR. The chain crosses the membrane as a helical span at residues 2445–2465; it reads VVFAWPMLYFLIPLWVSIGIL. The Cytoplasmic segment spans residues 2466-2724; that stretch reads VQLLLQVFTS…LKRLVPWYRV (259 aa). Residues 2725–2745 traverse the membrane as a helical segment; sequence IFMLIALYQLLSFLTEYFIDI. Over 2746–2762 the chain is Extracellular; it reads HWNPGETEMEPWMCVPT. Residues 2763–2783 traverse the membrane as a helical segment; sequence LVVEIGFAAVVVCTFYDFIFL. At 2784–2785 the chain is on the cytoplasmic side; the sequence is DH. A helical transmembrane segment spans residues 2786–2806; the sequence is FSLILNSIVFLMVSSSIVFYT. The Extracellular segment spans residues 2807 to 2823; it reads ASHVDGTLTSVLFPVFT. Residues 2824–2844 form a helical membrane-spanning segment; sequence FVILRISFLQAVVWNILFLIV. The Cytoplasmic portion of the chain corresponds to 2845 to 2858; it reads TVARFMLDKKYLPP. The helical transmembrane segment at 2859–2879 threads the bilayer; that stretch reads LNFVHYIPLFIGIDVFVAFVG. Residues 2880–2903 are Extracellular-facing; it reads YRLEYNQRKSFLLDYSVDASRRKQ. Residues 2904–2924 traverse the membrane as a helical segment; it reads REILNTMLPSFVVDQMINSEL. At 2925 to 3693 the chain is on the cytoplasmic side; that stretch reads NEEGIPTSLK…RTHFYNNKSN (769 aa). One can recognise a Guanylate cyclase 1 domain in the interval 2942–3150; it reads SVIFCDVYEF…DTVNTASRMK (209 aa). Disordered regions lie at residues 3214–3245, 3359–3402, 3456–3475, 3485–3508, 3523–3596, and 3620–3653; these read DVIS…ASSG, GQTE…SRFD, SGDE…EVPL, QARE…HTPT, GCAA…ETEK, and FRRR…VDDE. Over residues 3383–3402 the composition is skewed to basic and acidic residues; the sequence is RADRRPAGRREDSRGDSRFD. Basic and acidic residues-rich tracts occupy residues 3485–3499, 3529–3541, and 3549–3569; these read QARE…KRSG, EEEK…RESE, and TESR…DARE. The segment covering 3626–3637 has biased composition (low complexity); it reads AAPSEAASPSSA. A helical transmembrane segment spans residues 3694–3714; sequence INTIEQALIIFLVTFCVQTLT. At 3715–3736 the chain is on the extracellular side; that stretch reads RLALPRFYVVCSHHTINLHVCT. Residues 3737 to 3757 traverse the membrane as a helical segment; it reads GLYWAVRATYTLAAFVLWMLF. Topologically, residues 3758-3772 are cytoplasmic; that stretch reads HYRNRKEVATCLELR. The chain crosses the membrane as a helical span at residues 3773 to 3793; it reads WMVFLLNLLFISASCVFALSN. Residues 3794–3895 lie on the Extracellular side of the membrane; sequence SWGVCGQQQE…GSDLVTANGR (102 aa). The helical transmembrane segment at 3896-3916 threads the bilayer; sequence AYTYWLLSDTIELFFYIVILH. Residues 3917 to 3921 lie on the Cytoplasmic side of the membrane; that stretch reads HNTGL. A helical membrane pass occupies residues 3922–3942; it reads LFQNCILVDVLLMTMSLTFII. Topologically, residues 3943 to 3950 are extracellular; the sequence is TTARETAS. Residues 3951-3971 form a helical membrane-spanning segment; it reads TVSTIATFPCYVFFNLVSAYC. At 3972 to 4367 the chain is on the cytoplasmic side; sequence KEYIDRLTFY…GSTPGSALGS (396 aa). Residues 4024 to 4159 enclose the Guanylate cyclase 2 domain; that stretch reads TFLFADICGF…MDVLTGNMME (136 aa). Positions 4029, 4030, and 4073 each coordinate Mg(2+). The disordered stretch occupies residues 4292 to 4367; it reads ASHGDSGPSD…GSTPGSALGS (76 aa). The segment covering 4333–4344 has biased composition (basic and acidic residues); the sequence is DGLKQLRKEIER. The segment covering 4356–4367 has biased composition (polar residues); the sequence is DIGSTPGSALGS.

This sequence in the N-terminal section; belongs to the cation transport ATPase (P-type) (TC 3.A.3) family. Type IV subfamily. It in the C-terminal section; belongs to the adenylyl cyclase class-4/guanylyl cyclase family. Interacts with chaperone CDC50.1; the interaction regulates guanylate cyclase GC trafficking and sensing environmental changes. Interacts with UGO; the interaction regulates guanylate cyclase GC trafficking and catalytic activity. It depends on Mg(2+) as a cofactor. Requires Mn(2+) as cofactor.

It is found in the cell membrane. It catalyses the reaction GTP = 3',5'-cyclic GMP + diphosphate. In terms of biological role, catalyzes the synthesis of the second messenger cGMP from GTP. During the tachyzoite lytic growth cycle in host cells, detects and transduces environmental changes in potassium, phosphatidic acid and pH levels. By producing cGMP in response to these environmental changes, activates PKG and thereby regulates PKG-dependent microneme secretion which is essential for tachyzoite motility, host cell attachment invasion of and egress from host cells. May play a role in the fission of connected tachyzoites at their basal pole during egress. Does not display flippase activity towards phosphatidylserine, phosphatidic acid or phosphatidylcholine. The sequence is that of Guanylate cyclase from Toxoplasma gondii (strain ATCC 50853 / GT1).